The primary structure comprises 967 residues: Sulfite dehydrogenase subunit A (967 aa).

A 4Fe-4S Mo/W bis-MGD-type domain is found at 15-71 (VEVKETTCYMCACRCGIRVHLRDGEVRYIDGNPNHPLNKGVICAKGSSGIMKQYSPG). [4Fe-4S] cluster is bound by residues Cys-22, Cys-25, Cys-29, and Cys-57.

The protein belongs to the prokaryotic molybdopterin-containing oxidoreductase family. As to quaternary structure, forms a heterotrimeric membrane-bound complex composed of a catalytic heterodimer (SoeAB) and a membrane anchor protein (SoeC). It depends on [4Fe-4S] cluster as a cofactor. Requires Mo-bis(molybdopterin guanine dinucleotide) as cofactor.

It is found in the cell inner membrane. The catalysed reaction is a quinone + sulfite + H2O = a quinol + sulfate. It carries out the reaction a menaquinone + sulfite + H2O = a menaquinol + sulfate. Functionally, part of the SoeABC complex that catalyzes the oxidation of sulfite to sulfate. This chain is Sulfite dehydrogenase subunit A, found in Allochromatium vinosum (strain ATCC 17899 / DSM 180 / NBRC 103801 / NCIMB 10441 / D) (Chromatium vinosum).